The primary structure comprises 653 residues: Amyloid beta A4 precursor protein-binding family B member 1-interacting protein (653 aa).

The disordered stretch occupies residues 82–141; that stretch reads NNKSTAPFPPADASNSYHFHPPPMPSIITEDLSLLPPPPEFDPHYPPPPPDPLTEPKTQE. Residues 116 to 134 are compositionally biased toward pro residues; it reads LPPPPEFDPHYPPPPPDPL. The Ras-associating domain maps to 165 to 253; that stretch reads KKRIVKVHMI…IHFLEKNEKY (89 aa). Residues 295–404 form the PH domain; the sequence is VPELEAALYL…WVTGIRIAKY (110 aa). Residues 462–481 show a composition bias toward basic and acidic residues; it reads KHGEANKQEKKSSEVNKPET. The interval 462 to 653 is disordered; it reads KHGEANKQEK…ALQKKREPPT (192 aa). The span at 585-604 shows a compositional bias: pro residues; the sequence is PAPPPPPPPPAPAANVPPLP. Residues 605 to 614 show a composition bias toward basic residues; the sequence is VKKHPPKPPK.

This sequence belongs to the MRL family.

It is found in the cell membrane. Its subcellular location is the cytoplasm. The protein resides in the cytoskeleton. Its function is as follows. Appears to function in the signal transduction from Ras activation to actin cytoskeletal remodeling. The chain is Amyloid beta A4 precursor protein-binding family B member 1-interacting protein (apbb1ip) from Xenopus laevis (African clawed frog).